We begin with the raw amino-acid sequence, 305 residues long: Ribonuclease H (305 aa).

It carries out the reaction Endonucleolytic cleavage to 5'-phosphomonoester.. Functionally, plays essential roles in DNA replication by removing the RNA primers from lagging strand fragments. Exhibits 5'to 3' exonuclease activity on either RNA/DNA or DNA/DNA duplexes and endonuclease activity on either flap or fork DNA structures. This Enterobacteria phage T4 (Bacteriophage T4) protein is Ribonuclease H (rnh).